The following is a 504-amino-acid chain: Serine O-succinyltransferase (504 aa).

The N-terminal 26 residues, 1 to 26 (MLRASSKRLQLSWQVFRRFQSSNPQL), are a transit peptide targeting the mitochondrion. Residues 49–70 (QACPNSVDPSASITSPSLSSGP) are disordered. Low complexity predominate over residues 57–70 (PSASITSPSLSSGP). The 279-residue stretch at 117-395 (NAILLHTGLS…SAEEIIKLNE (279 aa)) folds into the AB hydrolase-1 domain. The interval 124–127 (GLSA) is important for substrate specificity. Serine 221 serves as the catalytic Nucleophile. Arginine 290 provides a ligand contact to substrate. Active-site residues include aspartate 443 and histidine 480. Position 481 (aspartate 481) interacts with substrate.

This sequence belongs to the AB hydrolase superfamily. MetX family.

The protein resides in the mitochondrion. The catalysed reaction is succinyl-CoA + L-serine = O-succinyl-L-serine + CoA. The protein operates within amino-acid biosynthesis; L-cysteine biosynthesis; L-cysteine from L-serine: step 1/2. In terms of biological role, transfers a succinyl group from succinyl-CoA to L-serine, forming succinyl-L-serine. Also has weak serine acetyl transferase activity and homoserine succinyl transferase activity. The chain is Serine O-succinyltransferase from Schizosaccharomyces pombe (strain 972 / ATCC 24843) (Fission yeast).